Consider the following 417-residue polypeptide: Phosphoglycerate kinase (417 aa).

14 residues coordinate (2R)-3-phosphoglycerate: Val-23, Asp-24, Phe-25, Asn-26, Gln-38, Arg-39, Ser-62, His-63, Gly-65, Arg-66, Leu-121, Arg-122, His-169, and Arg-170. Gly-213 serves as a coordination point for ADP. Gly-213 lines the CDP pocket. Positions 214 and 215 each coordinate AMP. Ala-214 is a binding site for ATP. Ala-214 lines the Mg(2+) pocket. Asp-218 serves as a coordination point for CDP. Asp-218 contacts Mg(2+). Lys-219 provides a ligand contact to AMP. Lys-219 is an ATP binding site. Gly-237 contacts ADP. Gly-237 lines the CDP pocket. Positions 238 and 312 each coordinate AMP. Residues Gly-238 and Gly-312 each contribute to the ATP site. CDP contacts are provided by Gly-337 and Phe-342. Phe-342 is an ADP binding site. Residue Glu-343 participates in AMP binding. ATP contacts are provided by Glu-343, Asp-374, and Thr-375. A Mg(2+)-binding site is contributed by Asp-374.

The protein belongs to the phosphoglycerate kinase family. In terms of assembly, monomer. Requires Mg(2+) as cofactor.

It localises to the cytoplasm. The protein localises to the mitochondrion. It carries out the reaction (2R)-3-phosphoglycerate + ATP = (2R)-3-phospho-glyceroyl phosphate + ADP. It participates in carbohydrate degradation; glycolysis; pyruvate from D-glyceraldehyde 3-phosphate: step 2/5. In terms of biological role, catalyzes one of the two ATP producing reactions in the glycolytic pathway via the reversible conversion of 1,3-diphosphoglycerate to 3-phosphoglycerate. Both L- and D- forms of purine and pyrimidine nucleotides can be used as substrates, but the activity is much lower on pyrimidines. Negatively regulates the biosynthesis of acetyl-CoA from pyruvate in the mitochondrion. The protein is Phosphoglycerate kinase (PGK1) of Yarrowia lipolytica (strain CLIB 122 / E 150) (Yeast).